A 120-amino-acid polypeptide reads, in one-letter code: Ribonuclease P protein component 4 (120 aa).

4 residues coordinate Zn(2+): Cys68, Cys71, Cys97, and Cys100.

This sequence belongs to the eukaryotic/archaeal RNase P protein component 4 family. As to quaternary structure, consists of a catalytic RNA component and at least 5 protein subunits. Forms a heterodimeric subcomplex with Rnp1. Reconstituted enzyme missing individual protein subunits is suboptimally active, showing each subunit contributes to optimization of activity. Zn(2+) is required as a cofactor.

It localises to the cytoplasm. It carries out the reaction Endonucleolytic cleavage of RNA, removing 5'-extranucleotides from tRNA precursor.. In terms of biological role, part of ribonuclease P, a protein complex that generates mature tRNA molecules by cleaving their 5'-ends. Binds RNase P RNA. This chain is Ribonuclease P protein component 4, found in Pyrococcus horikoshii (strain ATCC 700860 / DSM 12428 / JCM 9974 / NBRC 100139 / OT-3).